We begin with the raw amino-acid sequence, 360 residues long: Phospho-N-acetylmuramoyl-pentapeptide-transferase (360 aa).

The next 10 membrane-spanning stretches (helical) occupy residues 26 to 46 (AILS…IMIK), 70 to 90 (GTPT…ILLW), 94 to 114 (SNPY…IGFV), 132 to 152 (WKYF…YAYG), 168 to 188 (IMPQ…VGTS), 199 to 219 (GLAI…AWAT), 236 to 256 (ASEL…FLWF), 263 to 283 (VFMG…IAVL), 288 to 308 (LILV…ILQV), and 338 to 358 (VIVR…ATLK).

This sequence belongs to the glycosyltransferase 4 family. MraY subfamily. Requires Mg(2+) as cofactor.

It is found in the cell inner membrane. The catalysed reaction is UDP-N-acetyl-alpha-D-muramoyl-L-alanyl-gamma-D-glutamyl-meso-2,6-diaminopimeloyl-D-alanyl-D-alanine + di-trans,octa-cis-undecaprenyl phosphate = di-trans,octa-cis-undecaprenyl diphospho-N-acetyl-alpha-D-muramoyl-L-alanyl-D-glutamyl-meso-2,6-diaminopimeloyl-D-alanyl-D-alanine + UMP. Its pathway is cell wall biogenesis; peptidoglycan biosynthesis. Its function is as follows. Catalyzes the initial step of the lipid cycle reactions in the biosynthesis of the cell wall peptidoglycan: transfers peptidoglycan precursor phospho-MurNAc-pentapeptide from UDP-MurNAc-pentapeptide onto the lipid carrier undecaprenyl phosphate, yielding undecaprenyl-pyrophosphoryl-MurNAc-pentapeptide, known as lipid I. This Vibrio campbellii (strain ATCC BAA-1116) protein is Phospho-N-acetylmuramoyl-pentapeptide-transferase.